The chain runs to 430 residues: Adenylosuccinate synthetase (430 aa).

Residues 12–18 (GDEGKGK) and 40–42 (GHT) each bind GTP. The active-site Proton acceptor is D13. Mg(2+)-binding residues include D13 and G40. Residues 13-16 (DEGK), 38-41 (NAGH), T129, R143, Q224, T239, and R303 contribute to the IMP site. The active-site Proton donor is H41. 299 to 305 (TVSNRER) contributes to the substrate binding site. Residues R305, 331–333 (KLD), and 413–415 (STG) contribute to the GTP site.

Belongs to the adenylosuccinate synthetase family. In terms of assembly, homodimer. Mg(2+) serves as cofactor.

It localises to the cytoplasm. The enzyme catalyses IMP + L-aspartate + GTP = N(6)-(1,2-dicarboxyethyl)-AMP + GDP + phosphate + 2 H(+). It participates in purine metabolism; AMP biosynthesis via de novo pathway; AMP from IMP: step 1/2. Its function is as follows. Plays an important role in the de novo pathway of purine nucleotide biosynthesis. Catalyzes the first committed step in the biosynthesis of AMP from IMP. The protein is Adenylosuccinate synthetase of Ehrlichia ruminantium (strain Welgevonden).